We begin with the raw amino-acid sequence, 477 residues long: MTKKVIRKPDSLHDVFERKGGSAPTATHYCAGCGHGILHKLIGEAMDELGIQERAVMISPVGCAVFAYYYFDCGNVQVAHGRAPAVGTGISRAEDDAVVILYQGDGDLASIGLNETIQAANRGEKLAVFFVNNTVYGMTGGQMAPTTLVGEVTVTCPTGRDPRYAGYPLHMCELLDNLQAPVFIERVSLADPKRIRRARRAIKRALEIQRDGKGYAFVEVLSPCPTNLRQDAEGAERFLKEEMEKEFPVKNFRDRSAETEPLIRSESDFSRESLDRIFQIREDSVPDPVDDPEFPEVRVKIAGFGGQGVLSMGLTLAQAACSEGRHTSWYPAYGPEQRGGTSSCGVVISGERVGSPAVDTPDVLVALNQPSLDEFADDVADGGIILYDSTTASFSGGAVRAMGVPALEIARKHGTARAANTVMLGVMMALGLTGLDEESFREAIKFTFAGKEKIIDMNLRILEAGAEWARENIEGEL.

As to quaternary structure, heterotrimer of the VorA, VorB and VorC subunits.

The enzyme catalyses 3-methyl-2-oxobutanoate + 2 oxidized [2Fe-2S]-[ferredoxin] + CoA = 2-methylpropanoyl-CoA + 2 reduced [2Fe-2S]-[ferredoxin] + CO2 + H(+). The polypeptide is Ketoisovalerate oxidoreductase subunit VorA (vorA) (Methanothermobacter thermautotrophicus (strain ATCC 29096 / DSM 1053 / JCM 10044 / NBRC 100330 / Delta H) (Methanobacterium thermoautotrophicum)).